Reading from the N-terminus, the 66-residue chain is DNA gyrase inhibitor YacG (66 aa).

Zn(2+) is bound by residues Cys-9, Cys-12, Cys-28, and Cys-32. Positions His-45 to His-66 are disordered.

This sequence belongs to the DNA gyrase inhibitor YacG family. In terms of assembly, interacts with GyrB. The cofactor is Zn(2+).

Inhibits all the catalytic activities of DNA gyrase by preventing its interaction with DNA. Acts by binding directly to the C-terminal domain of GyrB, which probably disrupts DNA binding by the gyrase. The protein is DNA gyrase inhibitor YacG of Pseudomonas putida (strain ATCC 47054 / DSM 6125 / CFBP 8728 / NCIMB 11950 / KT2440).